Consider the following 1199-residue polypeptide: DNA-directed RNA polymerase subunit beta' (1199 aa).

Residues Cys60, Cys62, Cys75, and Cys78 each contribute to the Zn(2+) site. 3 residues coordinate Mg(2+): Asp449, Asp451, and Asp453. Residues Cys818, Cys892, Cys899, and Cys902 each contribute to the Zn(2+) site.

It belongs to the RNA polymerase beta' chain family. The RNAP catalytic core consists of 2 alpha, 1 beta, 1 beta' and 1 omega subunit. When a sigma factor is associated with the core the holoenzyme is formed, which can initiate transcription. It depends on Mg(2+) as a cofactor. Zn(2+) is required as a cofactor.

It catalyses the reaction RNA(n) + a ribonucleoside 5'-triphosphate = RNA(n+1) + diphosphate. Functionally, DNA-dependent RNA polymerase catalyzes the transcription of DNA into RNA using the four ribonucleoside triphosphates as substrates. The polypeptide is DNA-directed RNA polymerase subunit beta' (Geobacillus kaustophilus (strain HTA426)).